We begin with the raw amino-acid sequence, 97 residues long: Small ribosomal subunit protein uS19 (97 aa).

Belongs to the universal ribosomal protein uS19 family.

Protein S19 forms a complex with S13 that binds strongly to the 16S ribosomal RNA. The sequence is that of Small ribosomal subunit protein uS19 from Salinibacter ruber (strain DSM 13855 / M31).